The following is a 55-amino-acid chain: Lantibiotic nisin-U (55 aa).

A propeptide spanning residues M1–R24 is cleaved from the precursor. T26 carries the 2,3-didehydrobutyrine modification. The segment at residues S27–C31 is a cross-link (lanthionine (Ser-Cys)). S29 is subject to 2,3-didehydroalanine (Ser). Cross-links (beta-methyllanthionine (Thr-Cys)) lie at residues T32 to C35, T37 to C43, T47 to C50, and T49 to C52. A 2,3-didehydrobutyrine modification is found at T42.

Post-translationally, maturation of lantibiotics involves the enzymatic conversion of Thr, and Ser into dehydrated AA and the formation of thioether bonds with cysteine. This is followed by membrane translocation and cleavage of the modified precursor.

It localises to the secreted. In terms of biological role, lanthionine-containing peptide antibiotic (lantibiotic) active on Gram-positive bacteria. The bactericidal activity of lantibiotics is based on depolarization of energized bacterial cytoplasmic membranes, initiated by the formation of aqueous transmembrane pores. In Streptococcus uberis, this protein is Lantibiotic nisin-U (nsuA).